A 518-amino-acid chain; its full sequence is 2-isopropylmalate synthase (518 aa).

The region spanning 4 to 266 (INFFDTTLRD…ESTIQLNEIK (263 aa)) is the Pyruvate carboxyltransferase domain. 4 residues coordinate Mn(2+): aspartate 13, histidine 201, histidine 203, and asparagine 237. The regulatory domain stretch occupies residues 391-518 (DFISLQVHYG…GLSKQAAVGS (128 aa)).

This sequence belongs to the alpha-IPM synthase/homocitrate synthase family. LeuA type 1 subfamily. In terms of assembly, homodimer. It depends on Mn(2+) as a cofactor.

The protein resides in the cytoplasm. It carries out the reaction 3-methyl-2-oxobutanoate + acetyl-CoA + H2O = (2S)-2-isopropylmalate + CoA + H(+). The protein operates within amino-acid biosynthesis; L-leucine biosynthesis; L-leucine from 3-methyl-2-oxobutanoate: step 1/4. Its function is as follows. Catalyzes the condensation of the acetyl group of acetyl-CoA with 3-methyl-2-oxobutanoate (2-ketoisovalerate) to form 3-carboxy-3-hydroxy-4-methylpentanoate (2-isopropylmalate). The sequence is that of 2-isopropylmalate synthase from Bacillus licheniformis (strain ATCC 14580 / DSM 13 / JCM 2505 / CCUG 7422 / NBRC 12200 / NCIMB 9375 / NCTC 10341 / NRRL NRS-1264 / Gibson 46).